The following is a 172-amino-acid chain: MRKVKPARKLGRTAAHRRATLSSLSTQLILHKRIETTEAKAKETRKVVEKIITKALKGTVHAQREIFKDIRDKEAIKTLFGEVVAKVGDRPGGYTRIIKLCPRFGDAAKMAVIELVDFAEAPVAAPKAAKQDRAKRVKGSKKVTGDVAPAVAPVPSAPAETQEEAKAPESAE.

The disordered stretch occupies residues K127–E172. A compositionally biased stretch (low complexity) spans V147–A159. Basic and acidic residues predominate over residues E163–E172.

This sequence belongs to the bacterial ribosomal protein bL17 family. As to quaternary structure, part of the 50S ribosomal subunit. Contacts protein L32.

This Chlorobium luteolum (strain DSM 273 / BCRC 81028 / 2530) (Pelodictyon luteolum) protein is Large ribosomal subunit protein bL17.